Here is a 629-residue protein sequence, read N- to C-terminus: Coiled-coil domain-containing protein 93 (629 aa).

The disordered stretch occupies residues 1 to 23 (MGLPKGPEGQGLPEVETREDEEQ). The tract at residues 1–428 (MGLPKGPEGQ…ETLKAERAPG (428 aa)) is sufficient for interaction with CCDC22. Coiled-coil stretches lie at residues 231 to 430 (LSAA…PGEK) and 558 to 599 (LRQM…LLEK). A phosphoserine mark is found at S298, S301, and S305. The tract at residues 446–629 (THNEDLDRRY…LLSKIKAKAS (184 aa)) is sufficient for interaction with WASHC2C.

It belongs to the CCDC93 family. In terms of assembly, component of the commander complex consisting of the CCC subcomplex and the retriever subcomplex. Component of the CCC (COMMD/CCDC22/CCDC93) subcomplex consisting of COMMD1, COMMD2, COMMD3, COMMD4, COMMD5, COMMD6, COMMD7, COMMD8, COMMD9, COMMD10, CCDC22 and CCDC93. Forms a coiled-coil heterodimer with CCDC22; this heterodimer interacts with the guanine nucleotide exchange factor DENND10; the interaction is direct. Interacts with WASHC1. Interacts directly with WASHC2C. Interacts with SNX17 and SNX31.

It localises to the early endosome. Component of the commander complex that is essential for endosomal recycling of transmembrane cargos; the commander complex is composed of composed of the CCC subcomplex and the retriever subcomplex. Component of the CCC complex, which is involved in the regulation of endosomal recycling of surface proteins, including integrins, signaling receptor and channels. The CCC complex associates with SNX17, retriever and WASH complexes to prevent lysosomal degradation and promote cell surface recycling of numerous cargos such as integrins ITGA5:ITGB1. Involved in copper-dependent ATP7A trafficking between the trans-Golgi network and vesicles in the cell periphery; the function is proposed to depend on its association within the CCC complex and cooperation with the WASH complex on early endosomes and is dependent on its interaction with WASHC2C. The sequence is that of Coiled-coil domain-containing protein 93 (Ccdc93) from Mus musculus (Mouse).